Consider the following 229-residue polypeptide: Putative N-acetylmannosamine-6-phosphate 2-epimerase 2 (229 aa).

This sequence belongs to the NanE family.

The enzyme catalyses an N-acyl-D-glucosamine 6-phosphate = an N-acyl-D-mannosamine 6-phosphate. It functions in the pathway amino-sugar metabolism; N-acetylneuraminate degradation; D-fructose 6-phosphate from N-acetylneuraminate: step 3/5. Its function is as follows. Converts N-acetylmannosamine-6-phosphate (ManNAc-6-P) to N-acetylglucosamine-6-phosphate (GlcNAc-6-P). The polypeptide is Putative N-acetylmannosamine-6-phosphate 2-epimerase 2 (nanE2) (Salmonella typhimurium (strain LT2 / SGSC1412 / ATCC 700720)).